The primary structure comprises 1404 residues: MKSLLADLFKQTLPNEEEFDAITIGLASPDKIRSWSYGEVKKPETINYRTFKPERDGLFCAKIFGPVKDYECLCGKYKRLKHRGVICEKCGVEVTLSKVRRERMGHIELASPVAHIWFLKSLPSRLGMVLDMTLRDIERVLYFEAFVVVEPGMTPLNRAQLLTEDDYLAKVEEYGDDFDAVMGAEGIRELLRTLDVNQEIERLRSDLETTGSEAKIKKFSKRLKVLEAFQQSGIKPEWMILEVLPVLPPDLRPLVPLDGGRFATSDLNDLYRRVINRNNRLKRLLELKAPDIIVRNEKRMLQESVDSLLDNGRRGKAMTGANKRPLKSLADMIKGKGGRFRQNLLGKRVDYSGRSVITVGPQLKLHQCGLPKLMALELFKPFIFNKLELMGLATTIKQAKKMVESQEPVVWDILEDVIREHPVMLNRAPTLHRLGIQAFEPVLIEGKAIQLHPLVCVAFNADFDGDQMAVHVPLSLEAQMEARTLMLASNNVLSPANGDPIIVPSQDIVLGLYYATREGVNVPGEGMLFTDVGEVKRAYESGQISLHARVTVRLKEFDRGPEGERIERVVRHNTTAGRAILSEILPAGLPFSVIDKPLKKKEISKLINASFRRCGLRATVIFADQLMQYGYRLATRAGISIAVKDMLVPDLKEDLIRAAEAEVKEIAQQYTSGLVTDGERYNKVVDIWGRCGDQVAKAMMEQLGQEPVVDRNGNTVKQEAFNSIYMMADSGARGSAAQIRQLAGMRGLMAKPDGSIIETPITTNFREGLNVLQYFISTHGARKGLADTALKTANSGYLTRRLVDVTQDLVVIEDDCGTREGFNMKALIEGGEVVEPLRERILGRVCAEDVVNPDTQETAIEAGTLLDEDMVDLIESLGVDEVKVRTPLTCETRYGLCAKCYGRDLGRGAMVNAGEAVGVIAAQSIGEPGTQLTMRTFHVGGAASRAAAASGVEAKSSGTIRFAGNMRYVANAKGEKVVIARSAEVVVADDMGRERERHKLPYGAMLLVDDGAQVKAGAQLASWDPHTRPIVTEYSGTVKFENVEEGVTVAKQIDEVTGLSTLVVIDSKRRSSSGAAKGVRPQVKLLDENGEEVRIAGTDHAVAITFQVGSLITVKDGQQVSVGDILARIPQESAKTRDITGGLPRVAELFEARSPKDAGLLAEYTGTVSFGKDTKGKQRLVITEPDGTVHEFLIPKDKHLMVHDGQVVNKGELIVDGPADPHDILRLQGINELARYIIDEVQDVYRLQGVKINDKHIEVIVRQMLRRVVITDPGDTKFIREEQVERSEVLDENDRIEAEGKLPAQYENVLLGITKASLSTDSFISAASFQETTRVLTEAAIMGKRDELRGLKENVIVGRLIPAGTGLAYHRSRRSQSAGEDLGIEHAWAPIETPAEEQHDISAS.

Positions 72, 74, 87, and 90 each coordinate Zn(2+). Positions 462, 464, and 466 each coordinate Mg(2+). The Zn(2+) site is built by cysteine 816, cysteine 890, cysteine 897, and cysteine 900.

Belongs to the RNA polymerase beta' chain family. In terms of assembly, the RNAP catalytic core consists of 2 alpha, 1 beta, 1 beta' and 1 omega subunit. When a sigma factor is associated with the core the holoenzyme is formed, which can initiate transcription. It depends on Mg(2+) as a cofactor. Zn(2+) serves as cofactor.

It catalyses the reaction RNA(n) + a ribonucleoside 5'-triphosphate = RNA(n+1) + diphosphate. Its function is as follows. DNA-dependent RNA polymerase catalyzes the transcription of DNA into RNA using the four ribonucleoside triphosphates as substrates. The chain is DNA-directed RNA polymerase subunit beta' from Azoarcus sp. (strain BH72).